The primary structure comprises 1163 residues: Genome polyprotein (1163 aa).

Topologically, residues 1–104 (MSGRKAQGKT…LSSRKRRSYE (104 aa)) are cytoplasmic. Residues 38–72 (PGPSRGVQGFIFFFLFNVLTGRKITAHLKKLWRML) are hydrophobic; homodimerization of capsid protein C. The propeptide at 102–121 (SYEVLTVQFLILGMLLMTGG) is ER anchor for the capsid protein C, removed in mature form by serine protease NS3. A helical membrane pass occupies residues 105–125 (VLTVQFLILGMLLMTGGVTLV). The Extracellular segment spans residues 126–244 (RKSRWLLLNV…GERQLQKIER (119 aa)). N-linked (GlcNAc...) asparagine; by host glycosylation is found at Asn-134 and Asn-150. A helical transmembrane segment spans residues 245 to 265 (WLVRNPFFAVTALAIAYLVGS). Over 266 to 270 (NMTQR) the chain is Cytoplasmic. A helical transmembrane segment spans residues 271 to 285 (VVIALLVLAVGPAYS). Residues 286-730 (AHCIGITDRD…MVFGSAFQGL (445 aa)) lie on the Extracellular side of the membrane. 6 disulfide bridges follow: Cys-288–Cys-315, Cys-345–Cys-406, Cys-359–Cys-390, Cys-377–Cys-401, Cys-467–Cys-568, and Cys-585–Cys-615. A fusion peptide region spans residues 383 to 396 (DRGWGNGCGLFGKG). Residues 731–751 (FGGLSWITKVIMGAVLIWVGI) traverse the membrane as a helical segment. At 752–757 (NMRNMT) the chain is on the extracellular side. A helical transmembrane segment spans residues 758–778 (MSMSMILVGVIMMFLSLGVGA). At 779–1163 (DQGCAINFGK…RQGPKQILVG (385 aa)) the chain is on the extracellular side. 6 cysteine pairs are disulfide-bonded: Cys-782–Cys-793, Cys-833–Cys-921, Cys-957–Cys-1002, Cys-1058–Cys-1107, Cys-1069–Cys-1091, and Cys-1090–Cys-1094. N-linked (GlcNAc...) asparagine; by host glycans are attached at residues Asn-908 and Asn-986.

As to quaternary structure, homodimer. Interacts (via N-terminus) with host EXOC1 (via C-terminus); this interaction results in EXOC1 degradation through the proteasome degradation pathway. Forms heterodimers with envelope protein E in the endoplasmic reticulum and Golgi. In terms of assembly, homodimer; in the endoplasmic reticulum and Golgi. As to quaternary structure, homodimer; Homohexamer when secreted. Interacts with envelope protein E. In terms of processing, specific enzymatic cleavages in vivo yield mature proteins. The nascent capsid protein C contains a C-terminal hydrophobic domain that act as a signal sequence for translocation of prM into the lumen of the ER. Mature capsid protein C is cleaved at a site upstream of this hydrophobic domain by NS3. prM is cleaved in post-Golgi vesicles by a host furin, releasing the mature small envelope protein M, and peptide pr. Non-structural protein 2A-alpha, a C-terminally truncated form of non-structural protein 2A, results from partial cleavage by NS3. Specific enzymatic cleavages in vivo yield mature proteins peptide 2K acts as a signal sequence and is removed from the N-terminus of NS4B by the host signal peptidase in the ER lumen. Signal cleavage at the 2K-4B site requires a prior NS3 protease-mediated cleavage at the 4A-2K site. Cleaved in post-Golgi vesicles by a host furin, releasing the mature small envelope protein M, and peptide pr. This cleavage is incomplete as up to 30% of viral particles still carry uncleaved prM. Post-translationally, N-glycosylated. In terms of processing, N-glycosylated. The excreted form is glycosylated and this is required for efficient secretion of the protein from infected cells.

The protein resides in the virion. Its subcellular location is the host nucleus. It is found in the host cytoplasm. It localises to the host perinuclear region. The protein localises to the secreted. The protein resides in the virion membrane. Its subcellular location is the host endoplasmic reticulum membrane. Its function is as follows. Plays a role in virus budding by binding to the cell membrane and gathering the viral RNA into a nucleocapsid that forms the core of a mature virus particle. During virus entry, may induce genome penetration into the host cytoplasm after hemifusion induced by the surface proteins. Can migrate to the cell nucleus where it modulates host functions. In terms of biological role, inhibits RNA silencing by interfering with host Dicer. Prevents premature fusion activity of envelope proteins in trans-Golgi by binding to envelope protein E at pH6.0. After virion release in extracellular space, gets dissociated from E dimers. Functionally, acts as a chaperone for envelope protein E during intracellular virion assembly by masking and inactivating envelope protein E fusion peptide. prM is the only viral peptide matured by host furin in the trans-Golgi network probably to avoid catastrophic activation of the viral fusion activity in acidic Golgi compartment prior to virion release. prM-E cleavage is inefficient, and many virions are only partially matured. These uncleaved prM would play a role in immune evasion. Its function is as follows. May play a role in virus budding. Exerts cytotoxic effects by activating a mitochondrial apoptotic pathway through M ectodomain. May display a viroporin activity. In terms of biological role, binds to host cell surface receptor and mediates fusion between viral and cellular membranes. Envelope protein is synthesized in the endoplasmic reticulum in the form of heterodimer with protein prM. They play a role in virion budding in the ER, and the newly formed immature particle is covered with 60 spikes composed of heterodimer between precursor prM and envelope protein E. The virion is transported to the Golgi apparatus where the low pH causes dissociation of PrM-E heterodimers and formation of E homodimers. prM-E cleavage is inefficient, and many virions are only partially matured. These uncleaved prM would play a role in immune evasion. Involved in immune evasion, pathogenesis and viral replication. Once cleaved off the polyprotein, is targeted to three destinations: the viral replication cycle, the plasma membrane and the extracellular compartment. Essential for viral replication. Required for formation of the replication complex and recruitment of other non-structural proteins to the ER-derived membrane structures. Excreted as a hexameric lipoparticle that plays a role against host immune response. Antagonizing the complement function. Binds to the host macrophages and dendritic cells. Inhibits signal transduction originating from Toll-like receptor 3 (TLR3). Functionally, component of the viral RNA replication complex that functions in virion assembly and antagonizes the host immune response. The chain is Genome polyprotein from Aedes aegypti (Yellowfever mosquito).